The following is a 275-amino-acid chain: Large ribosomal subunit protein uL2c (275 aa).

Disordered stretches follow at residues 1–28 (MGIR…TKSK) and 227–251 (PCDH…TPWG). The span at 10-22 (TPGTRNRSSSDFS) shows a compositional bias: polar residues.

This sequence belongs to the universal ribosomal protein uL2 family. In terms of assembly, part of the 50S ribosomal subunit.

The protein resides in the plastid. Its subcellular location is the chloroplast. In Rhodomonas salina (Cryptomonas salina), this protein is Large ribosomal subunit protein uL2c (rpl2).